The following is a 113-amino-acid chain: Ribulose bisphosphate carboxylase small subunit (113 aa).

This sequence belongs to the RuBisCO small chain family. In terms of assembly, heterohexadecamer of 8 large and 8 small subunits. RuBisCO interacts with the C-terminus of CcmM, and can be found in complexes that also include carbonic anhydrase (ccaA).

It is found in the carboxysome. Functionally, ruBisCO catalyzes two reactions: the carboxylation of D-ribulose 1,5-bisphosphate, the primary event in carbon dioxide fixation, as well as the oxidative fragmentation of the pentose substrate in the photorespiration process. Both reactions occur simultaneously and in competition at the same active site. Although the small subunit is not catalytic it is essential for maximal activity. This is Ribulose bisphosphate carboxylase small subunit from Synechocystis sp. (strain ATCC 27184 / PCC 6803 / Kazusa).